A 202-amino-acid polypeptide reads, in one-letter code: Holliday junction branch migration complex subunit RuvA (202 aa).

The segment at 1 to 64 (MFAYIRGRLE…EDVISLYGFL (64 aa)) is domain I. The segment at 65–143 (TQEELNVFEL…KEQLTEYAQS (79 aa)) is domain II. Positions 144–152 (EEGGKVLDT) are flexible linker. A domain III region spans residues 152 to 202 (TDSSKMAEAVSALMVLGYSPAEANKAVSAVYREDMDIETIIKNALKGLARP).

This sequence belongs to the RuvA family. In terms of assembly, homotetramer. Forms an RuvA(8)-RuvB(12)-Holliday junction (HJ) complex. HJ DNA is sandwiched between 2 RuvA tetramers; dsDNA enters through RuvA and exits via RuvB. An RuvB hexamer assembles on each DNA strand where it exits the tetramer. Each RuvB hexamer is contacted by two RuvA subunits (via domain III) on 2 adjacent RuvB subunits; this complex drives branch migration. In the full resolvosome a probable DNA-RuvA(4)-RuvB(12)-RuvC(2) complex forms which resolves the HJ.

Its subcellular location is the cytoplasm. Functionally, the RuvA-RuvB-RuvC complex processes Holliday junction (HJ) DNA during genetic recombination and DNA repair, while the RuvA-RuvB complex plays an important role in the rescue of blocked DNA replication forks via replication fork reversal (RFR). RuvA specifically binds to HJ cruciform DNA, conferring on it an open structure. The RuvB hexamer acts as an ATP-dependent pump, pulling dsDNA into and through the RuvAB complex. HJ branch migration allows RuvC to scan DNA until it finds its consensus sequence, where it cleaves and resolves the cruciform DNA. The protein is Holliday junction branch migration complex subunit RuvA of Acetivibrio thermocellus (strain ATCC 27405 / DSM 1237 / JCM 9322 / NBRC 103400 / NCIMB 10682 / NRRL B-4536 / VPI 7372) (Clostridium thermocellum).